Here is a 1463-residue protein sequence, read N- to C-terminus: Nitric oxide synthase 1 (1463 aa).

The tract at residues 1–200 (MESHMFSVQQ…LQGSGENNKL (200 aa)) is interaction with NOSIP. The 83-residue stretch at 17 to 99 (SVRLFKRKVG…ETHVVLILRG (83 aa)) folds into the PDZ domain. Disordered regions lie at residues 110–194 (TFTG…LQGS), 215–250 (GKAI…LPLG), and 268–298 (VVLN…SKCP). Residues 158 to 240 (PDPGQEASSL…VEVQVDRDPD (83 aa)) are DYNLL1/PIN/nNOS-inhibiting protein-binding. Positions 226 to 243 (TETKDVEVQVDRDPDSKS) are enriched in basic and acidic residues. Residues 280-294 (PSASGKQSPTKNGSP) are compositionally biased toward polar residues. Residue serine 334 participates in (6R)-L-erythro-5,6,7,8-tetrahydrobiopterin binding. Cysteine 415 contributes to the heme b binding site. The L-arginine site is built by glutamine 478, tryptophan 587, tyrosine 588, and glutamate 592. Residues valine 677, tryptophan 678, and phenylalanine 691 each coordinate (6R)-L-erythro-5,6,7,8-tetrahydrobiopterin. Position 706 (tyrosine 706) interacts with heme b. Residues 725–745 (KRRAIGFKKLAEAVKFSAKLM) form a calmodulin-binding region. The 215-residue stretch at 755–969 (ATILYATETG…AFRTWAKKVF (215 aa)) folds into the Flavodoxin-like domain. FMN is bound by residues threonine 761, glutamate 762, threonine 763, lysine 765, serine 766, serine 807, threonine 808, and glycine 812. Residues serine 881, serine 891, and serine 892 each carry the phosphoserine modification. Residues serine 920, histidine 925, cysteine 927, glutamate 953, and glutamine 957 each coordinate FMN. The FAD-binding FR-type domain occupies 1024-1271 (KRVSAARLLS…VRGAPSFHLP (248 aa)). Arginine 1044 is a binding site for NADP(+). Positions 1066, 1207, 1208, 1209, 1210, 1225, and 1227 each coordinate FAD. NADP(+) is bound at residue serine 1230. Residues tyrosine 1231, valine 1244, cysteine 1245, and serine 1246 each contribute to the FAD site. Residues threonine 1285, arginine 1318, serine 1347, arginine 1348, lysine 1354, tyrosine 1356, glutamine 1358, aspartate 1391, threonine 1432, and arginine 1434 each contribute to the NADP(+) site.

Belongs to the NOS family. As to quaternary structure, homodimer. Interacts with DLG4; the interaction possibly being prevented by the association between NOS1 and CAPON. Forms a ternary complex with CAPON and RASD1. Forms a ternary complex with CAPON and SYN1. Interacts with ZDHHC23. Interacts with NOSIP; which may impair its synaptic location. Interacts with HTR4. Interacts with SLC6A4. Interacts with VAC14. Interacts (via N-terminal domain) with DLG4 (via N-terminal tandem pair of PDZ domains). Interacts with SLC6A4. Forms a complex with ASL, ASS1 and SLC7A1; the complex regulates cell-autonomous L-arginine synthesis and citrulline recycling while channeling extracellular L-arginine to nitric oxide synthesis pathway. Interacts with DMD; localizes NOS1 to sarcolemma in muscle cells. Interacts with DYNLL1; inhibits the nitric oxide synthase activity. Heme b is required as a cofactor. It depends on FAD as a cofactor. Requires FMN as cofactor. (6R)-L-erythro-5,6,7,8-tetrahydrobiopterin serves as cofactor. In terms of processing, ubiquitinated; mediated by STUB1/CHIP in the presence of Hsp70 and Hsp40 (in vitro).

The protein localises to the cell membrane. It is found in the sarcolemma. Its subcellular location is the cell projection. The protein resides in the dendritic spine. It catalyses the reaction 2 L-arginine + 3 NADPH + 4 O2 + H(+) = 2 L-citrulline + 2 nitric oxide + 3 NADP(+) + 4 H2O. Its activity is regulated as follows. Stimulated by calcium/calmodulin. Inhibited by DYNLL1 that prevents the dimerization of the protein. Inhibited by NOSIP. Functionally, produces nitric oxide (NO) which is a messenger molecule with diverse functions throughout the body. In the brain and peripheral nervous system, NO displays many properties of a neurotransmitter. Probably has nitrosylase activity and mediates cysteine S-nitrosylation of cytoplasmic target proteins such SRR. This chain is Nitric oxide synthase 1 (NOS1), found in Ovis aries (Sheep).